Consider the following 488-residue polypeptide: Replication-associated protein (488 aa).

The segment at 462-488 is disordered; that stretch reads PRPRQMQRSATEHNLFQYARSGRDPTS.

Its subcellular location is the host nucleus. Its function is as follows. Plays an essential for the replication of viral DNA. Presumably cleaves viral genomic dsRNA replicative form to initiate rolling circle replication. The chain is Replication-associated protein from Chaetoceros diatodnavirus 1 (Chaetoceros setoense DNA virus).